The following is a 186-amino-acid chain: Enhancer of split m7 protein (186 aa).

One can recognise a bHLH domain in the interval 13 to 68; that stretch reads YRKVMKPLLERKRRARINKCLDELKDLMAECVAQTGDAKFEKADILEVTVQHLRKL. The 34-residue stretch at 83–116 folds into the Orange domain; the sequence is FRAGYIRAANEVSRALASLPRVDVAFGTTLMTHL. Residues 183–186 carry the WRPW motif motif; it reads WRPW.

In terms of assembly, transcription repression requires formation of a complex with a corepressor protein (Groucho). Forms homodimers.

It localises to the nucleus. Its function is as follows. Participates in the control of cell fate choice by uncommitted neuroectodermal cells in the embryo. Transcriptional repressor. Binds DNA on N-box motifs: 5'-CACNAG-3'. The protein is Enhancer of split m7 protein of Drosophila melanogaster (Fruit fly).